The primary structure comprises 264 residues: uncharacterized protein (264 aa).

Residues 7 to 27 (LTLGICLVLLIILIVGYVIMT) traverse the membrane as a helical segment.

It belongs to the staphylococcal tandem lipoprotein family.

The protein resides in the cell membrane. This is an uncharacterized protein from Staphylococcus aureus (strain MW2).